An 84-amino-acid polypeptide reads, in one-letter code: Dolichol phosphate-mannose biosynthesis regulatory protein (84 aa).

The next 2 membrane-spanning stretches (helical) occupy residues 11 to 31 (LGLVALSLIIFTYYTAWVILL) and 49 to 69 (YAIAIPLAAGHLLLLFVGIFI).

This sequence belongs to the DPM2 family. Component of the dolichol-phosphate mannose (DPM) synthase complex composed of DPM1, DPM2 and DPM3; in the complex interacts directly with DPM3. Component of the glycosylphosphatidylinositol-N-acetylglucosaminyltransferase (GPI-GnT) complex composed at least by PIGA, PIGC, PIGH, PIGP, PIGQ, PIGY and DPM2. Interacts with PIGA, PIGC and PIGQ.

The protein localises to the endoplasmic reticulum membrane. The protein operates within protein modification; protein glycosylation. Regulates the biosynthesis of dolichol phosphate-mannose. Regulatory subunit of the dolichol-phosphate mannose (DPM) synthase complex; essential for the ER localization and stable expression of DPM1. Part of the glycosylphosphatidylinositol-N-acetylglucosaminyltransferase (GPI-GnT) complex that catalyzes the transfer of N-acetylglucosamine from UDP-N-acetylglucosamine to phosphatidylinositol and participates in the first step of GPI biosynthesis. May act by regulating the GPI-GNT complex. This is Dolichol phosphate-mannose biosynthesis regulatory protein from Bos taurus (Bovine).